The sequence spans 231 residues: Cytidylate kinase 1 (231 aa).

7–15 (GPSGAGKGT) is a binding site for ATP.

This sequence belongs to the cytidylate kinase family. Type 1 subfamily.

Its subcellular location is the cytoplasm. It catalyses the reaction CMP + ATP = CDP + ADP. It carries out the reaction dCMP + ATP = dCDP + ADP. This Haemophilus influenzae (strain ATCC 51907 / DSM 11121 / KW20 / Rd) protein is Cytidylate kinase 1.